We begin with the raw amino-acid sequence, 198 residues long: NADH-quinone oxidoreductase subunit B 1 (198 aa).

[4Fe-4S] cluster contacts are provided by Cys-77, Cys-78, Cys-142, and Cys-172.

It belongs to the complex I 20 kDa subunit family. In terms of assembly, NDH-1 is composed of 14 different subunits. Subunits NuoB, C, D, E, F, and G constitute the peripheral sector of the complex. The cofactor is [4Fe-4S] cluster.

The protein resides in the cell inner membrane. It catalyses the reaction a quinone + NADH + 5 H(+)(in) = a quinol + NAD(+) + 4 H(+)(out). Functionally, NDH-1 shuttles electrons from NADH, via FMN and iron-sulfur (Fe-S) centers, to quinones in the respiratory chain. The immediate electron acceptor for the enzyme in this species is believed to be ubiquinone. Couples the redox reaction to proton translocation (for every two electrons transferred, four hydrogen ions are translocated across the cytoplasmic membrane), and thus conserves the redox energy in a proton gradient. The sequence is that of NADH-quinone oxidoreductase subunit B 1 from Rhodopseudomonas palustris (strain ATCC BAA-98 / CGA009).